Consider the following 238-residue polypeptide: Ribosomal RNA small subunit methyltransferase G (238 aa).

Residues Gly77, Phe82, Ala128–Glu129, and Arg147 contribute to the S-adenosyl-L-methionine site.

It belongs to the methyltransferase superfamily. RNA methyltransferase RsmG family.

Its subcellular location is the cytoplasm. In terms of biological role, specifically methylates the N7 position of guanine in position 535 of 16S rRNA. This chain is Ribosomal RNA small subunit methyltransferase G, found in Lysinibacillus sphaericus (strain C3-41).